We begin with the raw amino-acid sequence, 516 residues long: Bifunctional purine biosynthesis protein PurH (516 aa).

Residues 1 to 150 (MSDDRKQIKR…KNHPSVAVVV (150 aa)) enclose the MGS-like domain.

The protein belongs to the PurH family.

It catalyses the reaction (6R)-10-formyltetrahydrofolate + 5-amino-1-(5-phospho-beta-D-ribosyl)imidazole-4-carboxamide = 5-formamido-1-(5-phospho-D-ribosyl)imidazole-4-carboxamide + (6S)-5,6,7,8-tetrahydrofolate. The catalysed reaction is IMP + H2O = 5-formamido-1-(5-phospho-D-ribosyl)imidazole-4-carboxamide. It functions in the pathway purine metabolism; IMP biosynthesis via de novo pathway; 5-formamido-1-(5-phospho-D-ribosyl)imidazole-4-carboxamide from 5-amino-1-(5-phospho-D-ribosyl)imidazole-4-carboxamide (10-formyl THF route): step 1/1. The protein operates within purine metabolism; IMP biosynthesis via de novo pathway; IMP from 5-formamido-1-(5-phospho-D-ribosyl)imidazole-4-carboxamide: step 1/1. The protein is Bifunctional purine biosynthesis protein PurH of Corynebacterium ammoniagenes (Brevibacterium ammoniagenes).